The chain runs to 334 residues: Heat-inducible transcription repressor HrcA (334 aa).

This sequence belongs to the HrcA family.

Negative regulator of class I heat shock genes (grpE-dnaK-dnaJ and groELS operons). Prevents heat-shock induction of these operons. The polypeptide is Heat-inducible transcription repressor HrcA (Paracidovorax citrulli (strain AAC00-1) (Acidovorax citrulli)).